Reading from the N-terminus, the 484-residue chain is MLTLLLIIPLVGALMLAPMQGNTRQSESQMKRLALGTSLINFVLSIVLWGEFDSSTSEYQFTQEFNQVNFCHLHIGVDGISLYFVLLTTFITPICILSNWDNIKEQLKYFLMCFLVLETLLIAVFVVLDILLFYVFFESVLIPLFLIVGIWGGSATRVRAAFLLFLYTLFGSLFMLLAFLVIYYNVGSTDFQVVSLSEINLESQKLLWLAVFISMAIKTPLLPFHVWLPRAHAEAPLAGSVILAGLILKLATYGYMRILIQFLPDATSYFSPLVQTIAVITLIYASLATLRQTDFKALVAYSSIGHMAVVVLGLFSNTIQGIDGALLLSIAHGVVSPALFILVGGVLYDRYHTRTIRYYRGMTAYMPLFSIMFFVFTIFNAAVPLSANWAGEFLCLAGAFQRNPVFAVLGSTGIVLSAAYSIWLYNRIAFGAWSKYLNYTTDLTRREFMLLLPLLFVAVVFGIFPNIILDSIHASTSGLIYSAS.

Transmembrane regions (helical) follow at residues 1–21 (MLTL…PMQG), 33–53 (LALG…GEFD), 77–97 (VDGI…ICIL), 109–129 (YFLM…VVLD), 130–150 (ILLF…IVGI), 162–182 (FLLF…FLVI), 206–226 (LLWL…PFHV), 236–256 (PLAG…YGYM), 270–290 (FSPL…LATL), 295–315 (FKAL…LGLF), 326–346 (LLLS…VGGV), 365–385 (YMPL…AVPL), 405–425 (VFAV…IWLY), and 448–468 (FMLL…PNII).

The protein belongs to the complex I subunit 4 family.

The protein resides in the mitochondrion inner membrane. It carries out the reaction a ubiquinone + NADH + 5 H(+)(in) = a ubiquinol + NAD(+) + 4 H(+)(out). Its function is as follows. Core subunit of the mitochondrial membrane respiratory chain NADH dehydrogenase (Complex I) that is believed to belong to the minimal assembly required for catalysis. Complex I functions in the transfer of electrons from NADH to the respiratory chain. The immediate electron acceptor for the enzyme is believed to be ubiquinone. The protein is NADH-ubiquinone oxidoreductase chain 4 (ND4) of Mycosarcoma maydis (Corn smut fungus).